The primary structure comprises 454 residues: Probable 1,4-beta-D-glucan cellobiohydrolase C (454 aa).

A signal peptide spans 1-19 (MKHLASSIALTLLLPAVQA). Residues 20–55 (QQTVWGQCGGQGWSGPTSCVAGAACSTLNPYYAQCI) enclose the CBM1 domain. 2 disulfides stabilise this stretch: cysteine 27–cysteine 44 and cysteine 38–cysteine 54. Thr-rich linker stretches follow at residues 59 to 94 (TATS…PTVT) and 95 to 454 (ASGN…NPSF). The segment at 68–95 (TTAATTTSQTTTKPTTTGPTTSAPTVTA) is disordered. Aspartate 184 is an active-site residue. Disulfide bonds link cysteine 185-cysteine 244 and cysteine 376-cysteine 423. Aspartate 230 acts as the Proton donor in catalysis. The active-site Nucleophile is aspartate 409. The N-linked (GlcNAc...) asparagine glycan is linked to asparagine 413.

Belongs to the glycosyl hydrolase 6 (cellulase B) family.

Its subcellular location is the secreted. It carries out the reaction Hydrolysis of (1-&gt;4)-beta-D-glucosidic linkages in cellulose and cellotetraose, releasing cellobiose from the non-reducing ends of the chains.. The biological conversion of cellulose to glucose generally requires three types of hydrolytic enzymes: (1) Endoglucanases which cut internal beta-1,4-glucosidic bonds; (2) Exocellobiohydrolases that cut the disaccharide cellobiose from the non-reducing end of the cellulose polymer chain; (3) Beta-1,4-glucosidases which hydrolyze the cellobiose and other short cello-oligosaccharides to glucose. This chain is Probable 1,4-beta-D-glucan cellobiohydrolase C (cbhC), found in Aspergillus fumigatus (strain CBS 144.89 / FGSC A1163 / CEA10) (Neosartorya fumigata).